The primary structure comprises 406 residues: Magnesium transporter NIPA4 (406 aa).

Topologically, residues 1-57 are extracellular; the sequence is MELRVANANGSCENGSIVSLYCSSQEVLCQIVRGISPEEPYNATLITWQERVRKKYG. 3 N-linked (GlcNAc...) asparagine glycosylation sites follow: N9, N14, and N42. Residues 58–78 form a helical membrane-spanning segment; that stretch reads FYIGVGLAFLSCFLIGTSVIL. Topologically, residues 79–126 are cytoplasmic; the sequence is KKKGLIRLVATGATRAVNGGYGYLKDPMWWAGMATMSAGEVANFGAYA. Residues 127–147 form a helical membrane-spanning segment; sequence FAPATVVTPLGALSVLISAIF. Residues 148–155 lie on the Extracellular side of the membrane; that stretch reads SSYCLGES. A helical membrane pass occupies residues 156–176; sequence LNLLGKLGCVICMAGSTVMVI. The Cytoplasmic segment spans residues 177–197; it reads HAPKEEKVTTVAEMASKMKDT. The helical transmembrane segment at 198 to 218 threads the bilayer; that stretch reads GFIVFAVLLVVSCLILIFIVA. The Extracellular segment spans residues 219-225; the sequence is PRYGQRN. The helical transmembrane segment at 226 to 246 threads the bilayer; the sequence is ILIYIIICSVIGSFSVTAVKG. Residues 247–263 lie on the Cytoplasmic side of the membrane; that stretch reads LGVTIRNFFQGLPVVRH. Residues 264-284 traverse the membrane as a helical segment; sequence PLPYILSLILGLSIIIQVNFL. The Extracellular portion of the chain corresponds to 285–295; sequence NRALDIFNTSL. N292 carries an N-linked (GlcNAc...) asparagine glycan. Residues 296 to 316 traverse the membrane as a helical segment; that stretch reads VFPIYYVFFTTVVVASSIVLF. Topologically, residues 317–326 are cytoplasmic; sequence KEWYTMSAVD. Residues 327-347 traverse the membrane as a helical segment; the sequence is IVGTLSGFVTIILGVFMLHAF. Over 348-406 the chain is Extracellular; sequence KDLDINQISLPHTHKNPTPAPAPEPTVIKLEDKNVLVDNIELASTPSPQQKPKVFMTDS.

Belongs to the NIPA family.

Its subcellular location is the cell membrane. It carries out the reaction Mg(2+)(in) = Mg(2+)(out). Functionally, acts as a Mg(2+) transporter. Can also transport other divalent cations such as Ba(2+), Sr(2+) and Fe(2+) but to a much less extent than Mg(2+). May be a receptor for ligands (trioxilins A3 and B3) from the hepoxilin pathway. The protein is Magnesium transporter NIPA4 (Nipal4) of Mus musculus (Mouse).